Here is a 205-residue protein sequence, read N- to C-terminus: Holliday junction branch migration complex subunit RuvA (205 aa).

Residues 1-64 form a domain I region; the sequence is MIGRLRGLLV…EDAQLLYGFI (64 aa). A domain II region spans residues 65 to 143; that stretch reads TKQERALFRL…SLMEASHGNE (79 aa). Positions 144-156 are flexible linker; the sequence is REFVLQSNYTPAP. Residues 157–205 are domain III; that stretch reads VVNTAEEDAISALLALGYKPAQASKAVSSVFEEGMDSETLIKASLKSML.

The protein belongs to the RuvA family. In terms of assembly, homotetramer. Forms an RuvA(8)-RuvB(12)-Holliday junction (HJ) complex. HJ DNA is sandwiched between 2 RuvA tetramers; dsDNA enters through RuvA and exits via RuvB. An RuvB hexamer assembles on each DNA strand where it exits the tetramer. Each RuvB hexamer is contacted by two RuvA subunits (via domain III) on 2 adjacent RuvB subunits; this complex drives branch migration. In the full resolvosome a probable DNA-RuvA(4)-RuvB(12)-RuvC(2) complex forms which resolves the HJ.

The protein resides in the cytoplasm. The RuvA-RuvB-RuvC complex processes Holliday junction (HJ) DNA during genetic recombination and DNA repair, while the RuvA-RuvB complex plays an important role in the rescue of blocked DNA replication forks via replication fork reversal (RFR). RuvA specifically binds to HJ cruciform DNA, conferring on it an open structure. The RuvB hexamer acts as an ATP-dependent pump, pulling dsDNA into and through the RuvAB complex. HJ branch migration allows RuvC to scan DNA until it finds its consensus sequence, where it cleaves and resolves the cruciform DNA. The sequence is that of Holliday junction branch migration complex subunit RuvA from Shewanella loihica (strain ATCC BAA-1088 / PV-4).